We begin with the raw amino-acid sequence, 322 residues long: Ribose-phosphate pyrophosphokinase (322 aa).

Residues 43–45 (DGE) and 102–103 (RQ) contribute to the ATP site. Mg(2+)-binding residues include H137 and D177. Residue K201 is part of the active site. Residues R203, D227, and 231 to 235 (DTAGT) contribute to the D-ribose 5-phosphate site.

The protein belongs to the ribose-phosphate pyrophosphokinase family. Class I subfamily. Homohexamer. Mg(2+) is required as a cofactor.

Its subcellular location is the cytoplasm. The catalysed reaction is D-ribose 5-phosphate + ATP = 5-phospho-alpha-D-ribose 1-diphosphate + AMP + H(+). The protein operates within metabolic intermediate biosynthesis; 5-phospho-alpha-D-ribose 1-diphosphate biosynthesis; 5-phospho-alpha-D-ribose 1-diphosphate from D-ribose 5-phosphate (route I): step 1/1. Functionally, involved in the biosynthesis of the central metabolite phospho-alpha-D-ribosyl-1-pyrophosphate (PRPP) via the transfer of pyrophosphoryl group from ATP to 1-hydroxyl of ribose-5-phosphate (Rib-5-P). The chain is Ribose-phosphate pyrophosphokinase from Xylella fastidiosa (strain 9a5c).